The primary structure comprises 347 residues: Leucine-rich repeat-containing protein 69 (347 aa).

LRR repeat units follow at residues 15 to 37 (NTKI…EKLP), 38 to 60 (NLKT…RTLT), 61 to 82 (QLTL…IKYL), 84 to 105 (SLKN…VFNG), 108 to 129 (RLIM…IGRL), 131 to 152 (SLTY…LCSL), 154 to 175 (HLSE…IKFL), 177 to 198 (NLQQ…ICHL), and 200 to 222 (KLRV…QNLR).

This sequence belongs to the LRRC69 family.

In Mus musculus (Mouse), this protein is Leucine-rich repeat-containing protein 69 (Lrrc69).